Here is a 185-residue protein sequence, read N- to C-terminus: Ribosome-recycling factor (185 aa).

A disordered region spans residues 137–158; the sequence is NQVKKLEKDKEISEDESKKAQE. Residues 140 to 158 are compositionally biased toward basic and acidic residues; it reads KKLEKDKEISEDESKKAQE.

Belongs to the RRF family.

Its subcellular location is the cytoplasm. Functionally, responsible for the release of ribosomes from messenger RNA at the termination of protein biosynthesis. May increase the efficiency of translation by recycling ribosomes from one round of translation to another. This is Ribosome-recycling factor from Helicobacter pylori (strain P12).